Here is a 101-residue protein sequence, read N- to C-terminus: MHCDIYRSSKKDEMYLYIARPDYPNDDVEGQDPLENVPEGIRTVFGKPTFVMHLELSQSRKLARVNVLHVLDSLQTKGFFIQMPPEGFINPSDEPEGLRGA.

Positions 1 to 93 (MHCDIYRSSK…PPEGFINPSD (93 aa)) constitute a YcgL domain.

The chain is YcgL domain-containing protein ACIAD2309 from Acinetobacter baylyi (strain ATCC 33305 / BD413 / ADP1).